Here is a 165-residue protein sequence, read N- to C-terminus: RNA pyrophosphohydrolase (165 aa).

The Nudix hydrolase domain occupies 6–149 (GYRPNVGIII…KQSVYHQALT (144 aa)). The short motif at 38–59 (GGVRENETPQQAVFRELKEEVG) is the Nudix box element.

Belongs to the Nudix hydrolase family. RppH subfamily. A divalent metal cation serves as cofactor.

Functionally, accelerates the degradation of transcripts by removing pyrophosphate from the 5'-end of triphosphorylated RNA, leading to a more labile monophosphorylated state that can stimulate subsequent ribonuclease cleavage. The polypeptide is RNA pyrophosphohydrolase (Hydrogenovibrio crunogenus (strain DSM 25203 / XCL-2) (Thiomicrospira crunogena)).